The following is a 239-amino-acid chain: Sensory rhodopsin-2 (239 aa).

Residues 1-3 (MVG) lie on the Extracellular side of the membrane. The helical transmembrane segment at 4 to 25 (LTTLFWLGAIGMLVGTLAFAWA) threads the bilayer. Topologically, residues 26–33 (GRDAGSGE) are cytoplasmic. Residues 34–55 (RRYYVTLVGISGIAAVAYVVMA) traverse the membrane as a helical segment. Residues 56-69 (LGVGWVPVAERTVF) lie on the Extracellular side of the membrane. The chain crosses the membrane as a helical span at residues 70 to 91 (APRYIDWILTTPLIVYFLGLLA). At 92 to 94 (GLD) the chain is on the cytoplasmic side. The helical transmembrane segment at 95–117 (SREFGIVITLNTVVMLAGFAGAM) threads the bilayer. Residues 118-121 (VPGI) lie on the Extracellular side of the membrane. The chain crosses the membrane as a helical span at residues 122 to 149 (ERYALFGMGAVAFLGLVYYLVGPMTESA). At 150–153 (SQRS) the chain is on the cytoplasmic side. A helical membrane pass occupies residues 154–181 (SGIKSLYVRLRNLTVILWAIYPFIWLLG). Residues 182 to 189 (PPGVALLT) are Extracellular-facing. The chain crosses the membrane as a helical span at residues 190–222 (PTVDVALIVYLDLVTKVGFGFIALDAAATLRAE). Lysine 205 carries the post-translational modification N6-(retinylidene)lysine. Over 223-239 (HGESLAGVDTDAPAVAD) the chain is Cytoplasmic.

The protein belongs to the archaeal/bacterial/fungal opsin family. As to quaternary structure, homodimer. Interacts with HTR-II.

The protein localises to the cell membrane. Functionally, photophobic photoreceptor responsible for the negative phototaxis. Activates the sensory rhodopsin II transducer (HTR-II) in response to blue light. The chain is Sensory rhodopsin-2 (sop2) from Natronomonas pharaonis (Natronobacterium pharaonis).